The chain runs to 316 residues: D-alanine--D-alanine ligase (316 aa).

The ATP-grasp domain maps to 107–303; the sequence is KEVFAARGLT…FEDLVERILI (197 aa). 133–188 lines the ATP pocket; that stretch reads AEGFGYPVVVKPSQEGSSVGVSIVKSPEELPSALELAFRYDDDILVERFIKGREIQ. 3 residues coordinate Mg(2+): D256, E269, and N271.

The protein belongs to the D-alanine--D-alanine ligase family. The cofactor is Mg(2+). Requires Mn(2+) as cofactor.

It is found in the cytoplasm. The enzyme catalyses 2 D-alanine + ATP = D-alanyl-D-alanine + ADP + phosphate + H(+). It functions in the pathway cell wall biogenesis; peptidoglycan biosynthesis. In terms of biological role, cell wall formation. The sequence is that of D-alanine--D-alanine ligase from Geobacter sulfurreducens (strain ATCC 51573 / DSM 12127 / PCA).